We begin with the raw amino-acid sequence, 314 residues long: UDP-N-acetylenolpyruvoylglucosamine reductase (314 aa).

An FAD-binding PCMH-type domain is found at 25–191 (KIGGPADLFA…VRVGMELRWG (167 aa)). R170 is an active-site residue. The active-site Proton donor is the S220. The active site involves E291.

It belongs to the MurB family. FAD is required as a cofactor.

It localises to the cytoplasm. The catalysed reaction is UDP-N-acetyl-alpha-D-muramate + NADP(+) = UDP-N-acetyl-3-O-(1-carboxyvinyl)-alpha-D-glucosamine + NADPH + H(+). Its pathway is cell wall biogenesis; peptidoglycan biosynthesis. Cell wall formation. The sequence is that of UDP-N-acetylenolpyruvoylglucosamine reductase from Heliobacterium modesticaldum (strain ATCC 51547 / Ice1).